The chain runs to 540 residues: Chaperonin GroEL (540 aa).

ATP is bound by residues 30-33, 87-91, Gly-415, and Asp-496; these read TLGP and DGTTT.

Belongs to the chaperonin (HSP60) family. In terms of assembly, forms a cylinder of 14 subunits composed of two heptameric rings stacked back-to-back. Interacts with the co-chaperonin GroES.

The protein localises to the cytoplasm. The enzyme catalyses ATP + H2O + a folded polypeptide = ADP + phosphate + an unfolded polypeptide.. Its function is as follows. Together with its co-chaperonin GroES, plays an essential role in assisting protein folding. The GroEL-GroES system forms a nano-cage that allows encapsulation of the non-native substrate proteins and provides a physical environment optimized to promote and accelerate protein folding. This is Chaperonin GroEL from Symbiobacterium thermophilum (strain DSM 24528 / JCM 14929 / IAM 14863 / T).